Consider the following 367-residue polypeptide: Dual specificity protein phosphatase 1 (367 aa).

In terms of domain architecture, Rhodanese spans 20–137 (RAAQCLLLDC…FSASCPELCS (118 aa)). A Tyrosine-protein phosphatase domain is found at 173-314 (GPVEILPFLY…LLQFESQVLA (142 aa)). The Phosphocysteine intermediate role is filled by cysteine 258. Phosphoserine; by MAPK1 and MAPK3 is present on residues serine 359 and serine 364.

The protein belongs to the protein-tyrosine phosphatase family. Non-receptor class dual specificity subfamily. In terms of processing, phosphorylation at Ser-359 and Ser-364 by MAPK1/ERK2 and MAPK3/ERK1 reduces its rate of degradation. Post-translationally, 'Lys-48'-linked polyubiquitinated by NEURL3, leading to proteasomal degradation. Expressed at high levels in the lung, liver placenta and pancreas. Moderate levels seen in the heart and skeletal muscle. Lower levels found in the brain and kidney.

It is found in the nucleus. It catalyses the reaction O-phospho-L-tyrosyl-[protein] + H2O = L-tyrosyl-[protein] + phosphate. It carries out the reaction O-phospho-L-seryl-[protein] + H2O = L-seryl-[protein] + phosphate. The enzyme catalyses O-phospho-L-threonyl-[protein] + H2O = L-threonyl-[protein] + phosphate. In terms of biological role, dual specificity phosphatase that dephosphorylates MAP kinase MAPK1/ERK2 on both 'Thr-183' and 'Tyr-185', regulating its activity during the meiotic cell cycle. The chain is Dual specificity protein phosphatase 1 from Homo sapiens (Human).